Reading from the N-terminus, the 423-residue chain is Histidine--tRNA ligase (423 aa).

It belongs to the class-II aminoacyl-tRNA synthetase family. Homodimer.

It localises to the cytoplasm. The catalysed reaction is tRNA(His) + L-histidine + ATP = L-histidyl-tRNA(His) + AMP + diphosphate + H(+). This is Histidine--tRNA ligase (hisS) from Pasteurella multocida (strain Pm70).